Here is a 375-residue protein sequence, read N- to C-terminus: Trichodiene synthase (375 aa).

Belongs to the trichodiene synthase family.

The catalysed reaction is (2E,6E)-farnesyl diphosphate = trichodiene + diphosphate. Its pathway is sesquiterpene biosynthesis; trichothecene biosynthesis. Functionally, TS is a member of the terpene cyclase group of enzymes. It catalyzes the isomerization and cyclization of farnesyl pyro-phosphate to form trichodiene, the first cyclic intermediate in the biosynthetic pathway for trichothecenes. It serves to branch trichothecene biosynthesis from the isoprenoid pathway. The chain is Trichodiene synthase (TRI5) from Fusarium boothii.